Reading from the N-terminus, the 59-residue chain is Preprotein translocase subunit SecG (59 aa).

Residues Met1–Lys35 lie on the Cytoplasmic side of the membrane. The helical transmembrane segment at Val36–Pro56 threads the bilayer. The Extracellular portion of the chain corresponds to Pro57 to Leu59.

This sequence belongs to the SEC61-beta family. Component of the protein translocase complex. Heterotrimer consisting of alpha (SecY), beta (SecG) and gamma (SecE) subunits. Can form oligomers of the heterotrimer.

Its subcellular location is the cell membrane. Involved in protein export. The function of the beta subunit is unknown, but it may be involved in stabilization of the trimeric complex. This chain is Preprotein translocase subunit SecG, found in Sulfolobus acidocaldarius (strain ATCC 33909 / DSM 639 / JCM 8929 / NBRC 15157 / NCIMB 11770).